A 285-amino-acid chain; its full sequence is Probable endonuclease 4 (285 aa).

Residues His69, His109, Glu145, Asp179, His182, His216, Asp229, His231, and Glu261 each coordinate Zn(2+).

This sequence belongs to the AP endonuclease 2 family. Requires Zn(2+) as cofactor.

It catalyses the reaction Endonucleolytic cleavage to 5'-phosphooligonucleotide end-products.. In terms of biological role, endonuclease IV plays a role in DNA repair. It cleaves phosphodiester bonds at apurinic or apyrimidinic (AP) sites, generating a 3'-hydroxyl group and a 5'-terminal sugar phosphate. This is Probable endonuclease 4 from Salmonella paratyphi A (strain AKU_12601).